Here is a 290-residue protein sequence, read N- to C-terminus: MAVSASLVKELRERTGLGMMECKKALVETDGDIDVAIENLRKASGLKAAKKADRTAAEGVVAVKVAEDGSYGVMVEVNSETDFVARDAGFLAFVDTVVNKAFDTKATDVAALAGDEIESTRQALVQKIGENIGVRRVQLIEAGSGVVGAYLHSNNRIAVLTQLTAGDVELARDIAMHVAAVNPQVVNSADMPAEVVEKEKEIIKAQPDMEGKPAEIVDKMMVGRINKFLKENSLVDQPFVKNPEVTVGKLAKDAGAEVVGFVRFEVGEGIEKVEEDFAAEVAAQVAASKA.

Positions 81–84 (TDFV) are involved in Mg(2+) ion dislocation from EF-Tu.

It belongs to the EF-Ts family.

It localises to the cytoplasm. Functionally, associates with the EF-Tu.GDP complex and induces the exchange of GDP to GTP. It remains bound to the aminoacyl-tRNA.EF-Tu.GTP complex up to the GTP hydrolysis stage on the ribosome. This is Elongation factor Ts from Saccharophagus degradans (strain 2-40 / ATCC 43961 / DSM 17024).